The chain runs to 241 residues: MKNQNVAIIIPSRLNSTRLIQKPLQLIGSITLIERVFKQVNKANIQHTYVATDSEEIANIIKKIGGKVILTDSDIPTGTDRTYEAFKLIPNNNNIHYIINVQGDIPFIEHRSILKIIEYLKNSEYDIVTPVVRVDRESIEASSNVTVAVDYMGKALYFSRSLIPHGAEELLYHLGIYGFRKNALEKFVSLKQTFLEKTERLEQLRILENGMTIGTCLVEDVPISVDTEEDLKKAIKFCREN.

This sequence belongs to the KdsB family.

Its subcellular location is the cytoplasm. It catalyses the reaction 3-deoxy-alpha-D-manno-oct-2-ulosonate + CTP = CMP-3-deoxy-beta-D-manno-octulosonate + diphosphate. It participates in nucleotide-sugar biosynthesis; CMP-3-deoxy-D-manno-octulosonate biosynthesis; CMP-3-deoxy-D-manno-octulosonate from 3-deoxy-D-manno-octulosonate and CTP: step 1/1. Its pathway is bacterial outer membrane biogenesis; lipopolysaccharide biosynthesis. Functionally, activates KDO (a required 8-carbon sugar) for incorporation into bacterial lipopolysaccharide in Gram-negative bacteria. This Rickettsia typhi (strain ATCC VR-144 / Wilmington) protein is 3-deoxy-manno-octulosonate cytidylyltransferase.